The following is a 782-amino-acid chain: Phosphoribosylformylglycinamidine synthase subunit PurL (782 aa).

The active site involves His-50. Residues Tyr-53 and Lys-92 each coordinate ATP. Glu-94 serves as a coordination point for Mg(2+). Substrate contacts are provided by residues 95–98 and Arg-117; that span reads SHNH. His-96 (proton acceptor) is an active-site residue. Residue Asp-118 participates in Mg(2+) binding. A substrate-binding site is contributed by Gln-241. Residue Asp-269 coordinates Mg(2+). 313–315 serves as a coordination point for substrate; sequence ESQ. Positions 520 and 557 each coordinate ATP. Asn-558 serves as a coordination point for Mg(2+). Position 560 (Ser-560) interacts with substrate.

The protein belongs to the FGAMS family. Monomer. Part of the FGAM synthase complex composed of 1 PurL, 1 PurQ and 2 PurS subunits.

The protein localises to the cytoplasm. It catalyses the reaction N(2)-formyl-N(1)-(5-phospho-beta-D-ribosyl)glycinamide + L-glutamine + ATP + H2O = 2-formamido-N(1)-(5-O-phospho-beta-D-ribosyl)acetamidine + L-glutamate + ADP + phosphate + H(+). The protein operates within purine metabolism; IMP biosynthesis via de novo pathway; 5-amino-1-(5-phospho-D-ribosyl)imidazole from N(2)-formyl-N(1)-(5-phospho-D-ribosyl)glycinamide: step 1/2. Its function is as follows. Part of the phosphoribosylformylglycinamidine synthase complex involved in the purines biosynthetic pathway. Catalyzes the ATP-dependent conversion of formylglycinamide ribonucleotide (FGAR) and glutamine to yield formylglycinamidine ribonucleotide (FGAM) and glutamate. The FGAM synthase complex is composed of three subunits. PurQ produces an ammonia molecule by converting glutamine to glutamate. PurL transfers the ammonia molecule to FGAR to form FGAM in an ATP-dependent manner. PurS interacts with PurQ and PurL and is thought to assist in the transfer of the ammonia molecule from PurQ to PurL. The chain is Phosphoribosylformylglycinamidine synthase subunit PurL from Cyanothece sp. (strain PCC 7425 / ATCC 29141).